The sequence spans 2179 residues: METIKSIADMATGVTKTIDATINSVNEIITNTDNASGGDILTKVADDASNILGPNCYATTSEPENKDVVQATTTVNTTNLTQHPSAPTLPFTPDFSNVDTFHSMAYDTTTGSKNPNKLVRLTTHAWASTLQRGHQIDHVNLPVDFWDEQRKPAYGHAKYFAAVRCGFHFQVQVNVNQGTAGSALVVYEPKPVVDYDKDLEFGAFTNLPHVLMNLAETTQADLCIPYVADTNYVKTDSSDLGQLKVYVWTPLSIPSGSSNQVDVTILGSLLQLDFQNPRVYGQNVDIYDTAPSKPIPLRKTKYLTMSTKYKWTRNKVDIAEGPGSMNMANVLSTTAAQSVALVGERAFYDPRTAGSKSRFDDLVKISQLFSVMADSTTPSANHGIDQKGYFKWSANSDPQAIVHRNLVHLNLFPNLKVFENSYSYFRGSLIIRLSVYASTFNRGRLNGFFPNSSTDETSEIDNAIYTICDIGSDNSFEITIPYSFSTWMRKTHGKPIGLFQIEVLNRLTYNYSSPNEVYCIVQGKMGQDAKFFCPTGSLVTFQNSWGSQMDLTDPLCIEDSVEDCKQTITPTELGLTSAQDDGPLGNDKPNYFLNFKSMNVDIFTVSHTKVDNIFGRAWFAHVHDFTNDGLWRQGLEFPKEGHGALSLLFAYFTGELNIHVLFLSDRGFLRVGHTYDTETNRTNFLSSSGIITVPAGEQMTLSVPSYSNKPLRTVRSSNALGYLLCKPLLTGTSSGRIEIFLSLRCPNFFFPLPAPKPATRKYRGDLATWSDQSPYGRQGKKQLMKLAYLDRGFYKHYGIVVGDDVYQLDSDDIFKTALTGKAKFTKTRLTPDWVVEEECELDYFRIKYLESSVNSEHIFSVDNNCETIAKDIFGSHSLSQHQQIGLIGTILLTAGLMSTIKTPVNPTTIKEFFNHAIEGDEQGLSLLVQKCTTFFSSAATELLDNDLVKFIIKILVRILCYMVLYCHKPNILTTACLSTLLVMDVTSSSVLSPSCKALMQCLMDGDVKKLAEVVAESMSNTDDDEIKEQICDTVKYTKQILSNQGPFKGFNEISTAFRHIDWWIQTLLKIKDMVLSVFKPSVEKRAVEWLERNKEHVCSILDYASDIIVKSKDQTKMKTQEFYQRYNDCLSKFKPIMAMCFRSCHNSISNTVYRLFQELARIPNRMATQNDLIRVEPIGIWIQGEPGQGKSFLTHTLSKQLQKTCGLQGIYTNPTASEFMDGYDNQDIHLIDDLGQTRKERDIEMLCNCISSDPDIVPMAHLEEKGKFYTSKLVIATTNKPDFSSTVLLDSGALRRRFPYIMHIRAAKHYSKSGKLNVSQAMPHMSTGECWEVSKNGRDWETLKLKELIDKITVDYKERIANYNTWKKQLEDQTLDDLDDAVSYIKHNYPDAIPYIDEYLNIEMSTLIEQMEAFIEPKPSVFKCFASRVGDKIKEASREVVKWFSDKLKSMLNFVERNKAWLTVVSAVTSAIGILLLVTKIFKKEESKDERAYNPTLPVAKPKGTFPVSQREFKNEAPYDGQLEHIISQMAYITGSTTGHITHCAGYQHDEIILHGHSIKYLEQEEELTLHYKNKVFPIEQPSVTQVTLGGKPMDLAIVKCKLPFRFKKNSKYYTNKIGTESMLIWMTEQGIITKEVQRVHHSGGIKTREGTESTKTISYTVKSCKGMCGGLLISKVEGNFKILGMHIAGNGEMGVAIPFNFLKNDMSDQGIVTEVTPIQPMYINTKSQIHKSPVYGAVEVKMGPAVLSKSDTRLEEPVDCLVKKSASKYRVNKFQVNNELWQGVKACVKSKFREIFGVNGIVDMKTAILGTSHVNSMDLSTSAGYSFVKSGYKKKDLICLEPFSVSPMLEKLVQEKFHNLLKGNQITTIFNTCLKDELRKLDKIATGKTRCIEACEIDYCIVYRMIMMEIYDKIYQTPCYYSGLAVGINPYRDWHFMINALNDYNYEMDYSQYDGSLSSMLLWEAVQVLAYCHDSPDLVMQLHKPVIDSDHVVFNERWLIHGGMPSGSPCTTVLNSLCNLMMCIYTTNLISPGIDCLPIVYGDDVILSLDKEIEPERLQSIMAESFGAEVTGSRKDEPPSLKPRMEVEFLKRKPGYFPESTFIVGKLDTENMIQHLMWMKNFSTFKQQLQSYLMELCLHGKDTYQHYVKILNPYLKEWNIPVDDYEVVIGKLVPMVFD.

The short motif at 763–765 (RGD) is the Cell attachment site element. The region spanning 786–881 (LAYLDRGFYK…IFGSHSLSQH (96 aa)) is the LRAT domain. H796 acts as the For protein 2A H-NC in catalysis. The For protein 2A H-NC; Acyl-thioester intermediate role is filled by C865. The 162-residue stretch at 1156–1317 (FQELARIPNR…KHYSKSGKLN (162 aa)) folds into the SF3 helicase domain. 1184–1191 (GEPGQGKS) serves as a coordination point for ATP. Y1493 is subject to O-(5'-phospho-RNA)-tyrosine. One can recognise a Peptidase C3 domain in the interval 1517 to 1707 (APYDGQLEHI…IPFNFLKNDM (191 aa)). Active-site for protease 3C activity residues include H1557, D1595, and C1669. C1896 functions as the Acyl-thioester intermediate in the catalytic mechanism. Residues 1944–2058 (DYNYEMDYSQ…SLDKEIEPER (115 aa)) enclose the RdRp catalytic domain. 2 residues coordinate Mg(2+): D1950 and D2044.

Belongs to the picornaviruses polyprotein family. Interacts with capsid protein VP1 and capsid protein VP3 to form heterotrimeric protomers. Five protomers subsequently associate to form pentamers which serve as building blocks for the capsid. In terms of assembly, interacts with capsid protein VP0, and capsid protein VP3 to form heterotrimeric protomers. Five protomers subsequently associate to form pentamers which serve as building blocks for the capsid. As to quaternary structure, interacts with capsid protein VP0 and capsid protein VP1 to form heterotrimeric protomers. Five protomers subsequently associate to form pentamers which serve as building blocks for the capsid. Homohexamer; forms a hexameric ring structure with 6-fold symmetry characteristic of AAA+ ATPases. In terms of assembly, homodimer. Interacts with host ACBD3. As to quaternary structure, interacts with RNA-directed RNA polymerase. Interacts with Viral protein genome-linked. It depends on Mg(2+) as a cofactor. In terms of processing, VPg is uridylylated by the polymerase and is covalently linked to the 5'-end of genomic RNA. This uridylylated form acts as a nucleotide-peptide primer for the polymerase. Specific enzymatic cleavages yield mature proteins. All cleavages are catalyzed by P3C.

The protein localises to the virion. It is found in the host cytoplasm. Its subcellular location is the host nucleus. It localises to the host nucleolus. The protein resides in the host cytoplasmic vesicle membrane. The catalysed reaction is RNA(n) + a ribonucleoside 5'-triphosphate = RNA(n+1) + diphosphate. It carries out the reaction a ribonucleoside 5'-triphosphate + H2O = a ribonucleoside 5'-diphosphate + phosphate + H(+). The enzyme catalyses Selective cleavage of Gln-|-Gly bond in the poliovirus polyprotein. In other picornavirus reactions Glu may be substituted for Gln, and Ser or Thr for Gly.. Its function is as follows. Forms an icosahedral capsid of pseudo T=3 symmetry together with capsid proteins VP1 and VP3. The capsid is 300 Angstroms in diameter, composed of 60 copies of each capsid protein and enclosing the viral positive strand RNA genome. Capsid proteins interact with host alpha-V/beta-3 integrin heterodimer to provide virion attachment target cell. This attachment induces virion internalization predominantly through clathrin-mediated endocytosis. Binds packaging signals present in the viral RNA. Forms an icosahedral capsid of pseudo T=3 symmetry together with capsid proteins VP0 and VP1. The capsid is 300 Angstroms in diameter, composed of 60 copies of each capsid protein and enclosing the viral positive strand RNA genome. Capsid proteins interact with host alpha-V/beta-3 integrin heterodimer to provide virion attachment target cell. This attachment induces virion internalization predominantly through clathrin-mediated endocytosis. Binds packaging signals present in the viral RNA. Functionally, forms an icosahedral capsid of pseudo T=3 symmetry together with capsid proteins VP0 and VP3. The capsid is 300 Angstroms in diameter, composed of 60 copies of each capsid protein and enclosing the viral positive strand RNA genome. Capsid proteins interact with host alpha-V/beta-3 integrin heterodimer to provide virion attachment target cell. This attachment induces virion internalization predominantly through clathrin-mediated endocytosis. Binds packaging signals present in the viral RNA. In terms of biological role, is not a protease. Its function is as follows. Plays an essential role in the virus replication cycle by acting as a viroporin. Creates a pore in the host endoplasmic reticulum and as a consequence releases Ca2+ in the cytoplasm of infected cell. In turn, high levels of cytoplasmic calcium may trigger membrane trafficking and transport of viral ER-associated proteins to viroplasms, sites of viral genome replication. Induces and associates with structural rearrangements of intracellular membranes. Displays RNA-binding, nucleotide binding and NTPase activities. May play a role in virion morphogenesis and viral RNA encapsidation by interacting with the capsid protein VP3. Functionally, localizes the viral replication complex to the surface of membranous vesicles. It inhibits host cell endoplasmic reticulum-to-Golgi apparatus transport and causes the disassembly of the Golgi complex, possibly through GBF1 interaction. This would result in depletion of MHC, trail receptors and IFN receptors at the host cell surface. Plays an essential role in viral RNA replication by recruiting ACBD3 and PI4KB at the viral replication sites, thereby allowing the formation of the rearranged membranous structures where viral replication takes place. In terms of biological role, acts as a primer for viral RNA replication and remains covalently bound to viral genomic RNA. VPg is uridylylated prior to priming replication into VPg-pUpU. The VPg-pUpU is then used as primer on the genomic RNA poly(A) by the RNA-dependent RNA polymerase to replicate the viral genome. Following genome release from the infecting virion in the cytoplasm, the VPg-RNA linkage is probably removed by host TDP2. During the late stage of the replication cycle, host TDP2 is excluded from sites of viral RNA synthesis and encapsidation, allowing for the generation of progeny virions. Its function is as follows. Cysteine protease that generates mature viral proteins from the precursor polyprotein. In addition to its proteolytic activity, it binds to viral RNA, and thus influences viral genome replication. RNA and substrate bind cooperatively to the protease. Replicates the viral genomic RNA on the surface of intracellular membranes. Covalently attaches UMP to a tyrosine of VPg, which is used to prime RNA synthesis. The positive stranded RNA genome is first replicated at virus induced membranous vesicles, creating a dsRNA genomic replication form. This dsRNA is then used as template to synthesize positive stranded RNA genomes. ss(+)RNA genomes are either translated, replicated or encapsidated. This Human parechovirus 2 (strain Williamson) (HPeV-2) protein is Genome polyprotein.